The sequence spans 552 residues: uncharacterized protein (552 aa).

One can recognise a DhaL domain in the interval lysine 8–lysine 200.

This is an uncharacterized protein from Staphylococcus epidermidis (strain ATCC 35984 / DSM 28319 / BCRC 17069 / CCUG 31568 / BM 3577 / RP62A).